The following is a 147-amino-acid chain: UPF0306 protein YhbP (147 aa).

Belongs to the UPF0306 family.

This is UPF0306 protein YhbP from Escherichia coli O7:K1 (strain IAI39 / ExPEC).